A 313-amino-acid polypeptide reads, in one-letter code: MSVVESHDIEFAAPRISEASVADYIALLKPRVMSLVIFTALVGLLLAPGYIHPVLAFTSILCIAVGAGASGALNMWYEDDIDAKMTRTANRPIPRGRVSKPEALTFGLVLSFFSVVTLGILVNWFAAALLAFTIFFYVVIYTIWLKRWTAQNIVIGGAAGALPPVVAWAAAAGSLSVEPMLLFAIIFFWTPPHFWALALFRAGDYANAGVPMLPVTAGPDATRLSILLYTIVLVAVAFAPWPLGYFDAIYGITSLALGGWMLLLTLRVYRLRHGSAALRASRSLFKFSILYLFALFAVLLLEVIVRGVIGALA.

The next 9 helical transmembrane spans lie at 35–55, 56–76, 98–118, 120–140, 153–173, 180–200, 226–246, 248–268, and 285–305; these read LVIF…HPVL, AFTS…LNMW, VSKP…VVTL, ILVN…YVVI, IVIG…AAAG, MLLF…LALF, ILLY…LGYF, AIYG…TLRV, and FKFS…EVIV.

The protein belongs to the UbiA prenyltransferase family. Protoheme IX farnesyltransferase subfamily.

It is found in the cell inner membrane. The enzyme catalyses heme b + (2E,6E)-farnesyl diphosphate + H2O = Fe(II)-heme o + diphosphate. It participates in porphyrin-containing compound metabolism; heme O biosynthesis; heme O from protoheme: step 1/1. Functionally, converts heme B (protoheme IX) to heme O by substitution of the vinyl group on carbon 2 of heme B porphyrin ring with a hydroxyethyl farnesyl side group. The protein is Protoheme IX farnesyltransferase of Rhodopseudomonas palustris (strain BisB18).